The chain runs to 365 residues: BTB/POZ and TAZ domain-containing protein 1 (365 aa).

Residues 25–96 (TDVEIITSGR…LYSPSVTENE (72 aa)) form the BTB domain. The short motif at 193-202 (RKKRRRRHRR) is the Nuclear localization signal element. A TAZ-type zinc finger spans residues 205-304 (NLYLQLSEAM…SESCRVPLCR (100 aa)). Residues 315–338 (KMVEDTKWKVLVRRVASAKAMSSL) form a caM-binding region.

In terms of assembly, interacts with CUL3A. Interacts with GTE9/BET9 and GTE11/BET10 through the BTB domain. Preferentially expressed in young leaves, roots and stems.

Its subcellular location is the nucleus. The protein resides in the cytoplasm. The protein operates within protein modification; protein ubiquitination. May act as a substrate-specific adapter of an E3 ubiquitin-protein ligase complex (CUL3-RBX1-BTB) which mediates the ubiquitination and subsequent proteasomal degradation of target proteins. Also targeted for degradation by the 26S proteasome pathway. May be involved in gametophyte development. The sequence is that of BTB/POZ and TAZ domain-containing protein 1 (BT1) from Arabidopsis thaliana (Mouse-ear cress).